The primary structure comprises 184 residues: MKVIAVTGYKPFELGIFKNDHPGVGCIKKALHRKLTTFVEDGLEWVIISGQLGVELWAAEVVFEIQVEYPDLKLAVFTPFLEQEENWKEDNREYYEFILSQADHVDSITKRKYESPEQFKLKNQFFIEKSDALLAVYDEEKPGSPKYIVETAKKKGEIENYHSYFILFSELQDIIEEEQWNNAE.

This sequence belongs to the UPF0398 family.

This is UPF0398 protein BCG9842_B3730 from Bacillus cereus (strain G9842).